We begin with the raw amino-acid sequence, 1281 residues long: MPAALGLLLPWLSLVGALQPGLEPPQSDPTEAGAVFFASEYNSTAEIVLFRSVSASWEYNTNLTTANAALQVEASLEEQNFTELWGKKAKELYGNIWSNFSDPQLKKIIGSIQTLGPSNLPLDKRQQYNTILSDMDKIYSTAKVCLDNGTCWDLEPDISDIMATSRSYKKLLYAWEGWHNAAGNPLRAKYQEFVTLSNEAYQMDGFEDTGSYWRSWYDSTTFEDDLEHLYNQLEPLYLNLHAFVRRKLYDRYGPKYINLKGPIPAHLLGNMWAQQWNNIYDLMVPYPDKPNLDVTNTMVNQGWNATHMFRVSEEFFTSLGLLEMPPEFWEKSMLEKPADGREVVCHASAWDFYNRKDFRIKQCTTVTMEQLFTVHHEMGHVQYYLQYKDQPVSFRGGANPGFHEAIGDVLSLSVSTPSHLQKIGLLSSAVEDEESNINYLLKMALEKIAFLPFGYLIDQWRWNVFSGRTPPSRYNYDWWYLRTKYQGICAPVSRNESNFDPGAKYHIPGNTPYIRYFVSFILQFQFHKALCQAANHTGPLHTCDIYMSKEAGAKLREVLKAGSSKSWQEILFNLTGTDKMDAGALLEYFSPVTTWLQEQNNKTNEVLGWPEFDWRPPIPEGYPEGIDKIVDEAQAKEFLSEYNSTAEVVWNAYTEASWEYNTNITDHNKEVMLEKNLAMSKHTIEYGMRARQFDPSDFQDETVTRILNKLSVLERAALPEDELKEYNTLLSDMETTYSVAKVCRENNTCHPLDPDLTDILATSRDYNELLFAWKGWRDASGAKIKDKYKRYVELSNKAAVLNGYTDNGAYWRSLYETPTFEEDLERLYLQLQPLYLNLHAYVRRALYNKYGAEHISLKGPIPAHLLGNMWAQSWSNIFDLVMPFPDATKVDATPAMKQQGWTPKMMFEESDRFFTSLGLIPMPQEFWDKSMIEKPADGREVVCHASAWDFYNRKDFRIKQCTVVNMDDLITVHHEMGHVQYFLQYMDQPISFRDGANPGFHEAIGDVMALSVSTPKHLHSINLLDQVTENEESDINYLMSIALDKIAFLPFGYLMDQWRWKVFDGRIKEDEYNQQWWNLRLKYQGLCPPVPRSEDDFDPGAKFHIPANVPYIRYFVSFVIQFQFHQALCKAAGHTGPLHTCDIYQSKEAGKLLGDAMKLGFSKPWPEAMQLITGQPNMSAEALMSYFEPLMTWLVKKNTENGEVLGWPEYSWTPYAVTEFHAATDTADFLGMSVGTKQATAGAWVLLALALVFLITSIFLGVKLFSSRRKAFKSSSEMELK.

A signal peptide spans 1–17; sequence MPAALGLLLPWLSLVGA. Over 18–1241 the chain is Extracellular; the sequence is LQPGLEPPQS…MSVGTKQATA (1224 aa). Peptidase M2 domains are found at residues 28-610 and 629-1208; these read DPTE…LGWP and IVDE…LGWP. N-linked (GlcNAc...) asparagine glycans are attached at residues N42, N62, N80, N99, and N148. The cysteines at positions 145 and 151 are disulfide-linked. Y217 lines the chloride pocket. A glycan (N-linked (GlcNAc...) asparagine) is linked at N304. Cysteines 345 and 363 form a disulfide. Residue H376 coordinates Zn(2+). E377 (proton acceptor 1) is an active-site residue. Positions 380 and 404 each coordinate Zn(2+). N495 carries an N-linked (GlcNAc...) asparagine glycan. H506 serves as the catalytic Proton donor 1. R515 contributes to the chloride binding site. C531 and C543 form a disulfide bridge. N535, N573, N601, N643, N663, and N746 each carry an N-linked (GlcNAc...) asparagine glycan. A disulfide bond links C743 and C749. Residues R777 and Y815 each contribute to the chloride site. Residues C943 and C961 are joined by a disulfide bond. H974 contributes to the Zn(2+) binding site. E975 (proton acceptor 2) is an active-site residue. Zn(2+) is bound by residues H978 and E1002. Residues W1076 and R1080 each contribute to the chloride site. H1104 acts as the Proton donor 2 in catalysis. Residue R1113 participates in chloride binding. An intrachain disulfide couples C1129 to C1141. N-linked (GlcNAc...) asparagine glycosylation is present at N1177. Residues 1201-1240 form a juxtamembrane stalk region; sequence NGEVLGWPEYSWTPYAVTEFHAATDTADFLGMSVGTKQAT. Residues 1242–1262 traverse the membrane as a helical segment; it reads GAWVLLALALVFLITSIFLGV. Topologically, residues 1263–1281 are cytoplasmic; that stretch reads KLFSSRRKAFKSSSEMELK.

The protein belongs to the peptidase M2 family. Zn(2+) serves as cofactor. Requires chloride as cofactor.

Its subcellular location is the cell membrane. It localises to the cytoplasm. It catalyses the reaction Release of a C-terminal dipeptide, oligopeptide-|-Xaa-Yaa, when Xaa is not Pro, and Yaa is neither Asp nor Glu. Thus, conversion of angiotensin I to angiotensin II, with increase in vasoconstrictor activity, but no action on angiotensin II.. The catalysed reaction is angiotensin I + H2O = L-histidyl-L-leucine + angiotensin II. The enzyme catalyses bradykinin + H2O = L-Phe-L-Arg + bradykinin(1-7). It carries out the reaction substance P + H2O = substance P(1-9) + L-Leu-L-Met-NH2. It catalyses the reaction substance P + H2O = substance P(1-8) + Gly-L-Leu-L-Met-NH2. The catalysed reaction is substance P + H2O = L-Phe-L-Phe-Gly-L-Leu-L-Met-NH2 + substance P(1-6). The enzyme catalyses neurotensin + H2O = neurotensin(1-11) + L-isoleucyl-L-leucine. It carries out the reaction goralatide + H2O = N-acetyl-L-seryl-L-aspartate + L-lysyl-L-proline. It catalyses the reaction Met-enkephalin + H2O = L-phenylalanyl-L-methionine + L-tyrosylglycylglycine. The catalysed reaction is Leu-enkephalin + H2O = L-tyrosylglycylglycine + L-phenylalanyl-L-leucine. The enzyme catalyses Met-enkephalin-Arg-Phe + H2O = L-arginyl-L-phenylalanine + Met-enkephalin. In terms of biological role, dipeptidyl carboxypeptidase that removes dipeptides from the C-terminus of a variety of circulating hormones, such as angiotensin I, bradykinin or enkephalins, thereby playing a key role in the regulation of blood pressure, electrolyte homeostasis or synaptic plasticity. Composed of two similar catalytic domains, each possessing a functional active site, with different selectivity for substrates. Plays a major role in the angiotensin-renin system that regulates blood pressure and sodium retention by the kidney by converting angiotensin I to angiotensin II, resulting in an increase of the vasoconstrictor activity of angiotensin. Also able to inactivate bradykinin, a potent vasodilator, and therefore enhance the blood pressure response. Acts as a regulator of synaptic transmission by mediating cleavage of neuropeptide hormones, such as substance P, neurotensin or enkephalins. Catalyzes degradation of different enkephalin neuropeptides (Met-enkephalin, Leu-enkephalin, Met-enkephalin-Arg-Phe and possibly Met-enkephalin-Arg-Gly-Leu). Also acts as a regulator of hematopoietic stem cell differentiation by mediating degradation of hemoregulatory peptide N-acetyl-SDKP (AcSDKP). The sequence is that of Angiotensin-converting enzyme from Gallus gallus (Chicken).